A 995-amino-acid polypeptide reads, in one-letter code: Polyprotein nsP1234 (995 aa).

ADP-D-ribose is bound by residues Gly30 and Phe32. The Zn(2+) site is built by Cys180, Cys182, Cys205, and Cys223. Short sequence motifs (FGDF; binding to host G3BP1) lie at residues 347 to 350 (FGDL) and 364 to 367 (FGDF). The RdRp catalytic domain maps to 749-864 (DAVLETDIAS…HGVKSDKLLA (116 aa)).

Interacts with mRNA-capping enzyme nsP1. Interacts with host DDX1. Interacts with host DDX3. Interacts (via C-terminus) with host G3BP1; this interaction inhibits the formation of host stress granules on viral mRNAs and the nsp3-G3BP1 complexes bind viral RNAs and probably orchestrate the assembly of viral replication complexes. Interacts (via C-terminus) with host G3BP2; this interaction inhibits the formation of host stress granules on viral mRNAs and the nsp3-G3BP2 complexes bind viral RNAs and probably orchestrate the assembly of viral replication complexes. In terms of assembly, interacts with mRNA-capping enzyme nsP1. Interacts with protease nsP2. interacts with itself. The cofactor is Mg(2+). It depends on Mn(2+) as a cofactor. In terms of processing, polyprotein P1234: Specific enzymatic cleavages in vivo yield mature proteins. The processing of the polyprotein is temporally regulated. In early stages (1.7 hpi), P1234 is first cleaved in trans through its nsP2 protease activity, releasing P123' and nsP4, which associate to form the early replication complex. At the same time, P1234 is also cut at the nsP1/nsP2 site early in infection but with lower efficiency. After replication of the viral minus-strand RNAs (4 hpi), the polyproteins are cut at the nsP1/nsP2 and nsP2/nsP3 sites very efficiently, preventing accumulation of P123' and P1234 and allowing the formation of the late replication complex. NsP3'/nsP4 site is not cleaved anymore and P34 is produced rather than nsP4. Specific enzymatic cleavages in vivo yield mature proteins. The processing of the polyprotein is temporally regulated. In early stages (1.7 hpi), P123 is cleaved at the nsP1/nsP2 site with low efficiency. After replication of the viral minus-strand RNAs (4 hpi), the polyproteins are cut at the nsP1/nsP2 and nsP2/nsP3 sites very efficiently, preventing accumulation of P123 and allowing the formation of the late replication complex. Post-translationally, specific enzymatic cleavages in vivo yield mature proteins. The processing of the polyprotein is temporally regulated. In early stages (1.7 hpi), P123' is cleaved at the nsP1/nsP2 site with low efficiency. After replication of the viral minus-strand RNAs (4 hpi), the polyproteins are cut at the nsP1/nsP2 and nsP2/nsP3 sites very efficiently, preventing accumulation of P123' and allowing the formation of the late replication complex. In terms of processing, phosphorylated by host on serines and threonines. Ubiquitinated; targets the protein for rapid degradation via the ubiquitin system. Nsp4 is present in extremely low quantities due to low frequency of translation through the amber stop-codon and the degradation by the ubiquitin pathway.

The protein resides in the host cytoplasmic vesicle membrane. It catalyses the reaction RNA(n) + a ribonucleoside 5'-triphosphate = RNA(n+1) + diphosphate. It carries out the reaction RNA(n) + ATP = RNA(n)-3'-adenine ribonucleotide + diphosphate. The catalysed reaction is 4-O-(ADP-D-ribosyl)-L-aspartyl-[protein] + H2O = L-aspartyl-[protein] + ADP-D-ribose + H(+). The enzyme catalyses 5-O-(ADP-D-ribosyl)-L-glutamyl-[protein] + H2O = L-glutamyl-[protein] + ADP-D-ribose + H(+). It catalyses the reaction ADP-alpha-D-ribose 1''-phosphate + H2O = ADP-D-ribose + phosphate. Its function is as follows. Polyprotein P1234: Inactive precursor of the viral replicase, which is activated by cleavages carried out by the viral protease nsP2. Functionally, the early replication complex formed by the polyprotein P123 and nsP4 synthesizes minus-strand RNAs. As soon P123 is cleaved into mature proteins, the plus-strand RNAs synthesis begins. The early replication complex formed by the polyprotein P123' and nsP4 synthesizes minus-strand RNAs. Polyprotein P123' is a short-lived polyprotein that accumulates during early stage of infection. As soon P123' is cleaved into mature proteins, the plus-strand RNAs synthesis begins. In terms of biological role, seems to be essential for minus-strand RNAs and subgenomic 26S mRNAs synthesis. Displays mono-ADP-ribosylhydrolase activity. ADP-ribosylation is a post-translational modification that controls various processes of the host cell and the virus probably needs to revert it for optimal viral replication. Binds proteins of FXR family and sequesters them into the viral RNA replication complexes thereby inhibiting the formation of host stress granules on viral mRNAs. The nsp3'-FXR complexes bind viral RNAs and probably orchestrate the assembly of viral replication complexes, thanks to the ability of FXR family members to self-assemble and bind DNA. Its function is as follows. Seems to be essential for minus-strand RNAs and subgenomic 26S mRNAs synthesis. Displays mono-ADP-ribosylhydrolase activity. ADP-ribosylation is a post-translantional modification that controls various processes of the host cell and the virus probably needs to revert it for optimal viral replication. Binds proteins of G3BP family and sequesters them into the viral RNA replication complexes thereby inhibiting the formation of host stress granules on viral mRNAs. The nsp3-G3BP complexes bind viral RNAs and probably orchestrate the assembly of viral replication complexes, thanks to the ability of G3BP family members to self-assemble and bind DNA. Functionally, RNA dependent RNA polymerase. Replicates genomic and antigenomic RNA by recognizing replications specific signals. The early replication complex formed by the polyprotein P123 and nsP4 synthesizes minus-strand RNAs. The late replication complex composed of fully processed nsP1-nsP4 is responsible for the production of genomic and subgenomic plus-strand RNAs. The core catalytic domain of nsP4 also possesses terminal adenylyltransferase (TATase) activity that is probably involved in maintenance and repair of the poly(A) tail, an element required for replication of the viral genome. The protein is Polyprotein nsP1234 of Middelburg virus.